Here is a 382-residue protein sequence, read N- to C-terminus: Lipid-A-disaccharide synthase (382 aa).

The protein belongs to the LpxB family.

The catalysed reaction is 2-N,3-O-bis[(3R)-3-hydroxytetradecanoyl]-alpha-D-glucosaminyl 1-phosphate + UDP-2-N,3-O-bis[(3R)-3-hydroxytetradecanoyl]-alpha-D-glucosamine = lipid A disaccharide (E. coli) + UDP + H(+). It carries out the reaction a lipid X + a UDP-2-N,3-O-bis[(3R)-3-hydroxyacyl]-alpha-D-glucosamine = a lipid A disaccharide + UDP + H(+). The protein operates within glycolipid biosynthesis; lipid IV(A) biosynthesis; lipid IV(A) from (3R)-3-hydroxytetradecanoyl-[acyl-carrier-protein] and UDP-N-acetyl-alpha-D-glucosamine: step 5/6. Its function is as follows. Condensation of UDP-2,3-diacylglucosamine and 2,3-diacylglucosamine-1-phosphate to form lipid A disaccharide, a precursor of lipid A, a phosphorylated glycolipid that anchors the lipopolysaccharide to the outer membrane of the cell. The protein is Lipid-A-disaccharide synthase of Escherichia coli O45:K1 (strain S88 / ExPEC).